The following is a 1919-amino-acid chain: Disks large homolog 5 (1919 aa).

The tract at residues 98–142 is disordered; the sequence is AEGAGSTYSVLSTMPSDSESSSSLSSVGTTGKAPSPPPLLTDQQV. Over residues 109–123 the composition is skewed to low complexity; the sequence is STMPSDSESSSSLSS. Phosphoserine is present on residues Ser-264 and Ser-295. Positions 383-599 form a coiled coil; sequence LNKATAQNKD…LEKEARFRQL (217 aa). PDZ domains follow at residues 620 to 710 and 705 to 796; these read VVEF…RRRK and VVRR…LKVF. Phosphoserine is present on Ser-900. Disordered stretches follow at residues 927 to 1122, 1150 to 1187, 1201 to 1230, 1245 to 1264, and 1271 to 1306; these read GVGE…FRPK, QEWAPYSPGHSSRHSNPPLYPSRPSVGTVPRSLTPSTT, SHRVGPCSSPPAARDAGPQGLHPSVQHQGR, EMRATHGSNSLPSSARLGSS, and AERIKIPSTPRYPRSVVGSERGSVSHSECSTPPQSP. A Phosphothreonine modification is found at Thr-984. Phosphoserine is present on Ser-1000. A Phosphothreonine modification is found at Thr-1011. A compositionally biased stretch (basic and acidic residues) spans 1017–1030; it reads RRSDSIKFQHRLET. Residue Ser-1021 is modified to Phosphoserine. The segment covering 1045 to 1055 has biased composition (pro residues); sequence TSPPSALPPDV. Thr-1183 carries the post-translational modification Phosphothreonine. Phosphoserine occurs at positions 1209 and 1263. Composition is skewed to low complexity over residues 1252 to 1264 and 1284 to 1298; these read SNSLPSSARLGSS and RSVVGSERGSVSHSE. Position 1334 is a phosphoserine (Ser-1334). One can recognise a PDZ 3 domain in the interval 1350 to 1429; sequence HVKVQKGSEP…TITILAQYNP (80 aa). The disordered stretch occupies residues 1434–1493; that stretch reads LSSHSRSSSHLDPAGTHSTLQGSGTTTPEHPSVIDPLMEQDEGPSTPPAKQSSSRIAGDA. A compositionally biased stretch (polar residues) spans 1449–1462; sequence THSTLQGSGTTTPE. The 82-residue stretch at 1501–1582 folds into the PDZ 4 domain; that stretch reads RVVFIKKSQL…GVRLKVQYRP (82 aa). The 69-residue stretch at 1593–1661 folds into the SH3 domain; the sequence is GDSFYIRALY…PSKYVMDQEF (69 aa). The residue at position 1666 (Ser-1666) is a Phosphoserine. The region spanning 1722–1905 is the Guanylate kinase-like domain; that stretch reads DSVSLAYQRV…ICTQILAMVN (184 aa).

The protein belongs to the MAGUK family. Interacts with MPP1. Interacts with CTNNB1 and with the third SH3 domain of SORBS3 to form a ternary complex. Interacts (via coiled-coil domain) with MARK3. Interacts (via PDZ domain 3) with STK3/MST2 and STK4/MST1. Interacts with SCRIB. Interacts with CTNB1, SMO and (via PDZ4 or guanylate kinase-like domain) with KIF7. As to expression, highly expressed in normal breast tissues and low-grade breast cancer tissues (at protein level). Highly expressed in the placenta and prostate. Expressed at a lower level in the thyroid, spinal cord, trachea, adrenal gland, skeletal muscle, pancreas, heart, brain, liver and kidney. A short splice product shows more limited expression, being absent from at least the brain.

Its subcellular location is the cell junction. The protein resides in the cell membrane. It localises to the postsynaptic density. It is found in the cytoplasm. The protein localises to the cytoskeleton. Its subcellular location is the cilium basal body. Acts as a regulator of the Hippo signaling pathway. Negatively regulates the Hippo signaling pathway by mediating the interaction of MARK3 with STK3/4, bringing them together to promote MARK3-dependent hyperphosphorylation and inactivation of STK3 kinase activity toward LATS1. Positively regulates the Hippo signaling pathway by mediating the interaction of SCRIB with STK4/MST1 and LATS1 which is important for the activation of the Hippo signaling pathway. Involved in regulating cell proliferation, maintenance of epithelial polarity, epithelial-mesenchymal transition (EMT), cell migration and invasion. Plays an important role in dendritic spine formation and synaptogenesis in cortical neurons; regulates synaptogenesis by enhancing the cell surface localization of N-cadherin. Acts as a positive regulator of hedgehog (Hh) signaling pathway. Plays a critical role in the early point of the SMO activity cycle by interacting with SMO at the ciliary base to induce the accumulation of KIF7 and GLI2 at the ciliary tip for GLI2 activation. This chain is Disks large homolog 5 (DLG5), found in Homo sapiens (Human).